Here is a 327-residue protein sequence, read N- to C-terminus: Methionyl-tRNA formyltransferase (327 aa).

Residue S121–P124 coordinates (6S)-5,6,7,8-tetrahydrofolate.

It belongs to the Fmt family.

It carries out the reaction L-methionyl-tRNA(fMet) + (6R)-10-formyltetrahydrofolate = N-formyl-L-methionyl-tRNA(fMet) + (6S)-5,6,7,8-tetrahydrofolate + H(+). Attaches a formyl group to the free amino group of methionyl-tRNA(fMet). The formyl group appears to play a dual role in the initiator identity of N-formylmethionyl-tRNA by promoting its recognition by IF2 and preventing the misappropriation of this tRNA by the elongation apparatus. The polypeptide is Methionyl-tRNA formyltransferase (Paraburkholderia phymatum (strain DSM 17167 / CIP 108236 / LMG 21445 / STM815) (Burkholderia phymatum)).